We begin with the raw amino-acid sequence, 181 residues long: Large ribosomal subunit protein uL10 (181 aa).

It belongs to the universal ribosomal protein uL10 family. In terms of assembly, part of the ribosomal stalk of the 50S ribosomal subunit. The N-terminus interacts with L11 and the large rRNA to form the base of the stalk. The C-terminus forms an elongated spine to which L12 dimers bind in a sequential fashion forming a multimeric L10(L12)X complex.

Its function is as follows. Forms part of the ribosomal stalk, playing a central role in the interaction of the ribosome with GTP-bound translation factors. In Trichormus variabilis (strain ATCC 29413 / PCC 7937) (Anabaena variabilis), this protein is Large ribosomal subunit protein uL10.